Reading from the N-terminus, the 100-residue chain is Apolipoprotein C-II (100 aa).

The signal sequence occupies residues 1-22; sequence MGSRFLLALFLILLVLGCEVQA. Positions 66–74 are lipid binding; the sequence is SVDEKLRDM. A lipoprotein lipase cofactor region spans residues 78-100; that stretch reads SSAAMTTYASIFTDQILTLLKGE.

Belongs to the apolipoprotein C2 family. Post-translationally, proapolipoprotein C-II is synthesized as a sialic acid containing glycoprotein which is subsequently desialylated prior to its proteolytic processing. Proapolipoprotein C-II, the major form found in plasma undergoes proteolytic cleavage of its N-terminal hexapeptide to generate the mature form apolipoprotein C-II, which occurs as the minor form in plasma.

The protein localises to the secreted. Its function is as follows. Component of chylomicrons, very low-density lipoproteins (VLDL), low-density lipoproteins (LDL), and high-density lipoproteins (HDL) in plasma. Plays an important role in lipoprotein metabolism as an activator of lipoprotein lipase. This chain is Apolipoprotein C-II (APOC2), found in Microtus ochrogaster (Prairie vole).